We begin with the raw amino-acid sequence, 269 residues long: Eukaryotic translation initiation factor 3 subunit G-2 (269 aa).

The RRM domain maps to 189 to 267 (SAVRISNLSE…LILCVEWSKP (79 aa)).

It belongs to the eIF-3 subunit G family. Component of the eukaryotic translation initiation factor 3 (eIF-3) complex. The eIF-3 complex interacts with pix.

The protein localises to the cytoplasm. Functionally, RNA-binding component of the eukaryotic translation initiation factor 3 (eIF-3) complex, which is involved in protein synthesis of a specialized repertoire of mRNAs and, together with other initiation factors, stimulates binding of mRNA and methionyl-tRNAi to the 40S ribosome. The eIF-3 complex specifically targets and initiates translation of a subset of mRNAs involved in cell proliferation. This subunit can bind 18S rRNA. The sequence is that of Eukaryotic translation initiation factor 3 subunit G-2 from Drosophila ananassae (Fruit fly).